A 490-amino-acid chain; its full sequence is Cytochrome P450 90D2 (490 aa).

A helical membrane pass occupies residues 4-24 (AAAGWAAPAFAVAAVVIWVVL). Position 437 (Cys437) interacts with heme.

It belongs to the cytochrome P450 family. Heme is required as a cofactor.

It is found in the membrane. It catalyses the reaction 6-deoxoteasterone + reduced [NADPH--hemoprotein reductase] + O2 = 3-dehydro-6-deoxoteasterone + oxidized [NADPH--hemoprotein reductase] + 2 H2O + H(+). It participates in plant hormone biosynthesis; brassinosteroid biosynthesis. Functionally, catalyzes the C6-oxidation step in brassinosteroids biosynthesis. May convert 6-deoxoteasterone (6-deoxoTE) to 3-dehydro-6-deoxoteasterone (6-deoxo3DT, 6-deoxo3DHT), and teasterone (TE) to 3-dehydroteasterone (3DT, 3-DHT). Involved in the elongation of leaf sheaths and stems. This is Cytochrome P450 90D2 from Oryza sativa subsp. indica (Rice).